A 434-amino-acid polypeptide reads, in one-letter code: ATP-dependent protease ATPase subunit HslU (434 aa).

ATP contacts are provided by residues isoleucine 18, 60–65, aspartate 247, glutamate 312, and arginine 384; that span reads GVGKTE.

This sequence belongs to the ClpX chaperone family. HslU subfamily. As to quaternary structure, a double ring-shaped homohexamer of HslV is capped on each side by a ring-shaped HslU homohexamer. The assembly of the HslU/HslV complex is dependent on binding of ATP.

The protein resides in the cytoplasm. Functionally, ATPase subunit of a proteasome-like degradation complex; this subunit has chaperone activity. The binding of ATP and its subsequent hydrolysis by HslU are essential for unfolding of protein substrates subsequently hydrolyzed by HslV. HslU recognizes the N-terminal part of its protein substrates and unfolds these before they are guided to HslV for hydrolysis. The polypeptide is ATP-dependent protease ATPase subunit HslU (Sinorhizobium fredii (strain NBRC 101917 / NGR234)).